We begin with the raw amino-acid sequence, 492 residues long: Cell division protein FtsA (492 aa).

2 disordered regions span residues 288-307 and 429-458; these read GEET…DGHE and YTRT…KAPS. Polar residues predominate over residues 291 to 303; the sequence is TPSQNVQIPTTGS. Positions 436-447 are enriched in low complexity; that stretch reads SSPTPHIHSSPT.

It belongs to the FtsA/MreB family. As to quaternary structure, self-interacts. Interacts with FtsZ.

It is found in the cell inner membrane. Its function is as follows. Cell division protein that is involved in the assembly of the Z ring. May serve as a membrane anchor for the Z ring. This is Cell division protein FtsA from Helicobacter pylori (strain ATCC 700392 / 26695) (Campylobacter pylori).